The following is a 548-amino-acid chain: MYEANMLRLSQRISNAVNHFSTAMMSGASASLTEGSAIIPFSNPNEVFYNPVQQFNRDLSVTAIRAWSETRSKKIVAKSHHRHQLLDQNSELSQENLTKCDTTHDFEKNCSEKTDSTSADNIAGFTILEALSATGLRSIRYAKELPNVKRILANDLLENAVKTIEKNVNYNNVSDIVIPNKGDANAVMHMNKFHYDVIDLDPYGSAAPFLDAAVQSVSKDGLLCITCTDSAVLAGNAYPEKCFSNYGGSSLRSNFCHEQAVRHLLYAIAASAAKYGRAIKPLLSLSIDFYFRVFVQIKAKPVLVKNLQSQSLLIYHCSGCGSFAEQPLGKTSPGRLPGTTKFSNASGPPVSANCEHCGYVHHVGGPLWGGPLHDAEFLKKMRAIAEDLDPEVYGTKRRILGMLALADEELPDVPFYFVLSQICSVLRSQSPPQNIFVSALLNAGYRVSGSHAKSNAIKTNAPWSFVWDVLRSWIKDHPVKLENISKTSAGAAILEKTPTAEVDFTFRPDSEFASKKEGYTRYQMNPTENWGPKSKPGKRTIAEVDSKS.

Positions Ala-30 to Leu-470 constitute a Trm1 methyltransferase domain. Arg-57, Arg-137, Asp-155, and Ala-186 together coordinate S-adenosyl-L-methionine. Zn(2+)-binding residues include Cys-317, Cys-320, Cys-354, and Cys-357. Positions Gln-523–Ser-548 are disordered.

The protein belongs to the class I-like SAM-binding methyltransferase superfamily. Trm1 family.

Its subcellular location is the mitochondrion. It is found in the nucleus. It localises to the cytoplasm. It catalyses the reaction guanosine(26) in tRNA + 2 S-adenosyl-L-methionine = N(2)-dimethylguanosine(26) in tRNA + 2 S-adenosyl-L-homocysteine + 2 H(+). Dimethylates a single guanine residue at position 26 of nuclear- and mitochondrial-encoded tRNAs using S-adenosyl-L-methionine as donor of the methyl groups. Also has tRNA strand annealing and dissociation activity independently of its tRNA guanine-dimethyltransferase activity. This Schizosaccharomyces pombe (strain 972 / ATCC 24843) (Fission yeast) protein is tRNA (guanine(26)-N(2))-dimethyltransferase.